A 277-amino-acid polypeptide reads, in one-letter code: NADPH-dependent 7-cyano-7-deazaguanine reductase (277 aa).

Residue 86-88 (IES) coordinates substrate. 88–89 (SK) is a binding site for NADPH. Cys-185 serves as the catalytic Thioimide intermediate. Asp-192 acts as the Proton donor in catalysis. 224–225 (HE) serves as a coordination point for substrate. 253–254 (RG) is a binding site for NADPH.

It belongs to the GTP cyclohydrolase I family. QueF type 2 subfamily. Homodimer.

Its subcellular location is the cytoplasm. The catalysed reaction is 7-aminomethyl-7-carbaguanine + 2 NADP(+) = 7-cyano-7-deazaguanine + 2 NADPH + 3 H(+). The protein operates within tRNA modification; tRNA-queuosine biosynthesis. In terms of biological role, catalyzes the NADPH-dependent reduction of 7-cyano-7-deazaguanine (preQ0) to 7-aminomethyl-7-deazaguanine (preQ1). The sequence is that of NADPH-dependent 7-cyano-7-deazaguanine reductase from Hydrogenovibrio crunogenus (strain DSM 25203 / XCL-2) (Thiomicrospira crunogena).